A 410-amino-acid chain; its full sequence is Mating-type locus allele B1 protein (410 aa).

Residues 1–110 are variable domain between B alleles; the sequence is MSSDPNFSLI…FNVVSPDVGC (110 aa). Positions 107 to 184 form a DNA-binding region, homeobox; TALE-type; that stretch reads DVGCRNLSED…NARRRSGWSH (78 aa). Residues 111–410 are highly conserved between B alleles; it reads RNLSEDLPAY…PFLCLSVAFV (300 aa). 3 disordered regions span residues 202 to 239, 278 to 335, and 374 to 395; these read RAKL…PLTP, TPKP…TPEL, and ARGN…PDEV. Residues 205 to 233 show a composition bias toward low complexity; it reads LSSSNQSTPPSSTSDSLSNNLDDVLSDNL. The Nuclear localization signal signature appears at 276–308; that stretch reads KKTPKPGMPRPVTTVAKRHPARKTKPAAKPKSR. The span at 291–307 shows a compositional bias: basic residues; that stretch reads AKRHPARKTKPAAKPKS. A compositionally biased stretch (polar residues) spans 312 to 335; the sequence is PRASTTPSIDSTLDSSKLESTPEL. The interval 333–410 is not essential for B1 function; sequence PELSMCSTAD…PFLCLSVAFV (78 aa). Residues 375-388 show a composition bias toward basic residues; sequence RGNRKVKALPKRAG.

Belongs to the TALE/M-ATYP homeobox family.

It localises to the nucleus. In terms of biological role, the B locus has at least 25 alleles, and any combination of two different B alleles yields a multimeric regulatory protein, that activates genes responsible for the pathogenicity and for the sexual development of the fungus within the corn plant. The protein is Mating-type locus allele B1 protein of Mycosarcoma maydis (Corn smut fungus).